Reading from the N-terminus, the 629-residue chain is Interleukin-23 receptor (629 aa).

Positions 1–23 (MNQVTIQWDAVIALYILFSWCHG) are cleaved as a signal peptide. Topologically, residues 24–355 (GITNINCSGH…LTSDNRGDIG (332 aa)) are extracellular. Residue Asn29 is glycosylated (N-linked (GlcNAc...) asparagine; partial). Asn47, Asn81, and Asn141 each carry an N-linked (GlcNAc...) asparagine glycan. Fibronectin type-III domains follow at residues 127-217 (IPDE…LDDI) and 219-318 (IPSA…TPET). Asn180 carries N-linked (GlcNAc...) (high mannose) asparagine glycosylation. 2 N-linked (GlcNAc...) asparagine glycosylation sites follow: Asn232 and Asn262. Residue Asn273 is glycosylated (N-linked (GlcNAc...) asparagine; partial). Residues 356 to 376 (LLLGMIVFAVMLSILSLIGIF) form a helical membrane-spanning segment. Residues 377 to 629 (NRSFRTGIKR…HFNRISLLEK (253 aa)) lie on the Cytoplasmic side of the membrane.

This sequence belongs to the type I cytokine receptor family. Type 2 subfamily. In terms of assembly, heterodimer with IL12RB1. In presence of IL23, the heterodimer forms the IL23 receptor. Interacts with JAK2 and in presence of IL23 with STAT3. In terms of processing, phosphorylated in response to IL23. Expressed by monocytes, Th1, Th0, NK and dendritic cells. Isoform 1 is specifically expressed in NK cells.

It is found in the cell membrane. In terms of biological role, associates with IL12RB1 to form the interleukin-23 receptor. Binds IL23 and mediates T-cells, NK cells and possibly certain macrophage/myeloid cells stimulation probably through activation of the Jak-Stat signaling cascade. IL23 functions in innate and adaptive immunity and may participate in acute response to infection in peripheral tissues. IL23 may be responsible for autoimmune inflammatory diseases and be important for tumorigenesis. The protein is Interleukin-23 receptor (IL23R) of Homo sapiens (Human).